Reading from the N-terminus, the 99-residue chain is Aspartyl/glutamyl-tRNA(Asn/Gln) amidotransferase subunit C (99 aa).

The protein belongs to the GatC family. Heterotrimer of A, B and C subunits.

The catalysed reaction is L-glutamyl-tRNA(Gln) + L-glutamine + ATP + H2O = L-glutaminyl-tRNA(Gln) + L-glutamate + ADP + phosphate + H(+). It catalyses the reaction L-aspartyl-tRNA(Asn) + L-glutamine + ATP + H2O = L-asparaginyl-tRNA(Asn) + L-glutamate + ADP + phosphate + 2 H(+). Functionally, allows the formation of correctly charged Asn-tRNA(Asn) or Gln-tRNA(Gln) through the transamidation of misacylated Asp-tRNA(Asn) or Glu-tRNA(Gln) in organisms which lack either or both of asparaginyl-tRNA or glutaminyl-tRNA synthetases. The reaction takes place in the presence of glutamine and ATP through an activated phospho-Asp-tRNA(Asn) or phospho-Glu-tRNA(Gln). The polypeptide is Aspartyl/glutamyl-tRNA(Asn/Gln) amidotransferase subunit C (Mycobacterium marinum (strain ATCC BAA-535 / M)).